The following is a 433-amino-acid chain: 3-phosphoshikimate 1-carboxyvinyltransferase (433 aa).

3-phosphoshikimate is bound by residues lysine 21, serine 22, and arginine 26. Lysine 21 serves as a coordination point for phosphoenolpyruvate. The phosphoenolpyruvate site is built by glycine 96 and arginine 124. Residues serine 167, serine 168, glutamine 169, serine 195, aspartate 310, and lysine 337 each contribute to the 3-phosphoshikimate site. Glutamine 169 contributes to the phosphoenolpyruvate binding site. The active-site Proton acceptor is aspartate 310. Arginine 341, arginine 384, and lysine 410 together coordinate phosphoenolpyruvate.

The protein belongs to the EPSP synthase family. In terms of assembly, monomer.

Its subcellular location is the cytoplasm. It carries out the reaction 3-phosphoshikimate + phosphoenolpyruvate = 5-O-(1-carboxyvinyl)-3-phosphoshikimate + phosphate. Its pathway is metabolic intermediate biosynthesis; chorismate biosynthesis; chorismate from D-erythrose 4-phosphate and phosphoenolpyruvate: step 6/7. Catalyzes the transfer of the enolpyruvyl moiety of phosphoenolpyruvate (PEP) to the 5-hydroxyl of shikimate-3-phosphate (S3P) to produce enolpyruvyl shikimate-3-phosphate and inorganic phosphate. The chain is 3-phosphoshikimate 1-carboxyvinyltransferase from Clostridium botulinum (strain Eklund 17B / Type B).